Consider the following 644-residue polypeptide: (E2-independent) E3 ubiquitin-conjugating enzyme FATS (644 aa).

Positions Met-1 to Gln-67 are required for interaction with p53/TP53. Disordered stretches follow at residues Thr-62 to Gly-83, Leu-305 to Thr-349, Val-367 to Ser-413, and Asn-475 to Tyr-507. The interval Gln-67–Val-175 is required for interaction with HDAC1. The segment covering Glu-398 to Ser-410 has biased composition (low complexity). The span at Thr-481–Ser-492 shows a compositional bias: pro residues. The segment at Thr-516–Val-644 is ALMS motif. Positions Lys-598–Val-629 form a coiled coil.

As to quaternary structure, interacts with HDAC1; the interaction prevents binding of HDAC1 to CDKN1A/p21 and facilitates the acetylation and stabilization of CDKN1A/p21. Interacts with p53/TP53; the interaction inhibits binding of p53/TP53 and MDM2. Highly expressed in testis. Weak expression found in brain, lung, heart, ovary, thymus, spleen and kidney.

It localises to the cytoplasm. The protein resides in the cytoskeleton. The protein localises to the microtubule organizing center. Its subcellular location is the centrosome. In terms of biological role, tumor suppressor that is required to sustain G2/M checkpoint after DNA damage. Acts as a p53/TP53 activator by inhibiting MDM2 binding to p53/TP53 and stimulating non-proteolytic polyubiquitination of p53/TP53. Exhibits ubiquitin ligase (E3) activity and assemble ubiquitin polymers through 'Lys-11'- (K11-), 'Lys-29'- (K29-) and 'Lys-63'- (K63)-linkages, independently of the ubiquitin-conjugating enzyme (E2). Promotes p53/TP53-dependent transcription of CDKN1A/p21, leading to robust checkpoint response. Mediates CDKN1A/p21 protein stability in a ubiquitin-independent manner. Interacts with HDAC1 and prevents binding of HDAC1 to CDKN1A/p21 and facilitates the acetylation and stabilization of CDKN1A/p21. May have a role in the assembly of primary cilia. This is (E2-independent) E3 ubiquitin-conjugating enzyme FATS from Mus musculus (Mouse).